The following is a 254-amino-acid chain: O-antigen biosynthesis glycosyltransferase WbnJ (254 aa).

This sequence belongs to the glycosyltransferase 2 family.

The enzyme catalyses an N-acetyl-alpha-D-galactosaminyl derivative + UDP-alpha-D-galactose = a beta-D-galactosyl-(1-&gt;3)-N-acetyl-alpha-D-galactosaminyl derivative + UDP + H(+). It carries out the reaction alpha-D-GalNAc-(1-&gt;3)-alpha-D-GalNAc-di-trans,octa-cis-undecaprenyl diphosphate + UDP-alpha-D-galactose = beta-D-Gal-(1-&gt;3)-alpha-D-GalNAc-(1-&gt;3)-alpha-D-GalNAc-di-trans,octa-cis-undecaprenyl diphosphate + UDP + H(+). The protein operates within bacterial outer membrane biogenesis; LPS O-antigen biosynthesis. Functionally, involved in the assembly of the O-repeating unit during O-antigen biosynthesis. The chain is O-antigen biosynthesis glycosyltransferase WbnJ from Escherichia coli.